The sequence spans 664 residues: Macoilin (664 aa).

4 consecutive transmembrane segments (helical) span residues 28 to 48 (TFLY…DFVL), 75 to 95 (AFSV…LLFI), 120 to 140 (VCLP…AIRF), and 154 to 174 (FAAH…KSYV). The span at 253-265 (REKGKEKDKDAKK) shows a compositional bias: basic and acidic residues. Residues 253-274 (REKGKEKDKDAKKHNLGINNNN) form a disordered region. S305 is modified (phosphoserine). Over residues 320-348 (KNYKNASGVVNSSPRSHSATNGSIPSSSS) the composition is skewed to polar residues. Residues 320 to 375 (KNYKNASGVVNSSPRSHSATNGSIPSSSSKNEKKQKCTSKSPSTHKDLMENCIPNN) form a disordered region. Residue N324 is glycosylated (N-linked (GlcNAc...) asparagine). The residue at position 332 (S332) is a Phosphoserine. Residues N340 and N452 are each glycosylated (N-linked (GlcNAc...) asparagine). Residues 630 to 664 (TSPLSPVSPHYSSKFVETSPSGLDPNASVYQPLKK) are disordered. S631 and S634 each carry phosphoserine. N-linked (GlcNAc...) asparagine glycosylation occurs at N655.

It belongs to the macoilin family.

Its subcellular location is the rough endoplasmic reticulum membrane. It is found in the nucleus membrane. In terms of biological role, plays a role in the regulation of neuronal activity. The polypeptide is Macoilin (MACO1) (Macaca mulatta (Rhesus macaque)).